A 697-amino-acid chain; its full sequence is Sentrin-specific protease (697 aa).

Positions 1-14 (MSRRSDLSDKDSQS) are enriched in basic and acidic residues. 2 disordered regions span residues 1–47 (MSRR…QGLG) and 365–387 (SEES…SDSY). The short motif at 15-19 (RKRHW) is the Nuclear localization signal element. A Nuclear localization signal motif is present at residues 462–467 (KVEKKK). The protease stretch occupies residues 501 to 664 (IQICKKDLAT…VFSCQFGEWA (164 aa)). Active-site residues include histidine 585, aspartate 602, and cysteine 653.

This sequence belongs to the peptidase C48 family.

It localises to the nucleus envelope. In terms of biological role, protease that deconjugates smo-1 from targeted proteins and may catalyze the processing of smo-1 to its mature form. This Caenorhabditis elegans protein is Sentrin-specific protease (ulp-1).